Consider the following 127-residue polypeptide: MSEKIDQIVEELKTLTLLEASELVSKIEETFDVDASASVGGGMMMAGPAVVEEVEEKTEFDVMLDEVPADKKIAVLKVVRSLTGLGLKEAKELVESAPKQIQEGVAKDAAEEAKKQIEDAGGKASLK.

The tract at residues 104 to 127 is disordered; sequence GVAKDAAEEAKKQIEDAGGKASLK. Positions 105 to 121 are enriched in basic and acidic residues; it reads VAKDAAEEAKKQIEDAG.

This sequence belongs to the bacterial ribosomal protein bL12 family. In terms of assembly, homodimer. Part of the ribosomal stalk of the 50S ribosomal subunit. Forms a multimeric L10(L12)X complex, where L10 forms an elongated spine to which 2 to 4 L12 dimers bind in a sequential fashion. Binds GTP-bound translation factors.

The protein localises to the plastid. The protein resides in the chloroplast. Functionally, forms part of the ribosomal stalk which helps the ribosome interact with GTP-bound translation factors. Is thus essential for accurate translation. In Trieres chinensis (Marine centric diatom), this protein is Large ribosomal subunit protein bL12c.